A 373-amino-acid polypeptide reads, in one-letter code: Probable G-protein coupled receptor 45 (373 aa).

Over 1 to 38 (MACNSTPMGTYEHLLLNVSNTLDPGDTPLSAPLRISLA) the chain is Extracellular. Asparagine 17 is a glycosylation site (N-linked (GlcNAc...) asparagine). A helical transmembrane segment spans residues 39 to 59 (IMMLLMIVVGFLGNTVVCIIV). The Cytoplasmic segment spans residues 60-75 (YQRPAMRSAINLLLAT). The chain crosses the membrane as a helical span at residues 76-96 (LAFSDIMLSLCCMPFTAITLI). At 97 to 109 (TVRWHFGDHFCRL) the chain is on the extracellular side. The helical transmembrane segment at 110–130 (SATLYWFFVLEGVAILLIISV) threads the bilayer. The Cytoplasmic segment spans residues 131–149 (DRFLIIVQRQDKLNPRRAK). The chain crosses the membrane as a helical span at residues 150–170 (MIIAASWVLSFCISAPSFTGW). Residues 171-198 (TFMEVPARAPQCVLGYTEFPAERAYVVT) lie on the Extracellular side of the membrane. Residues 199–219 (LVVAVFFAPFGVMLCSYLCIL) form a helical membrane-spanning segment. The Cytoplasmic segment spans residues 220 to 269 (NTVRKNAVRVHNQSDSLDLRQLTGAGLRRLRRQQQQASLDLSFKTKAFTT). Residues 270–290 (ILILFVGFSLCWLPHSVYSLL) form a helical membrane-spanning segment. Residues 291–306 (SAFSRRFYYSASFYTT) lie on the Extracellular side of the membrane. A helical transmembrane segment spans residues 307–327 (STCVLWLSYLKSVFNPIVYCW). Residues 328 to 373 (RIKKFREACIELLPHTFQILPKVPERIQRKIQPSTIYVCNENQSAV) lie on the Cytoplasmic side of the membrane.

This sequence belongs to the G-protein coupled receptor 1 family. In terms of tissue distribution, brain specific.

The protein localises to the cell membrane. In terms of biological role, orphan receptor. May play a role in brain function. The polypeptide is Probable G-protein coupled receptor 45 (Gpr45) (Mus musculus (Mouse)).